A 665-amino-acid chain; its full sequence is Phenol hydroxylase (665 aa).

Residues 18–19 (PA), 43–45 (DKR), 51–56 (NGQADG), glutamine 118, tyrosine 290, aspartate 358, and 368–372 (GQGMN) each bind FAD. Aspartate 55 contributes to the substrate binding site. Substrate is bound at residue tyrosine 290.

The protein belongs to the PheA/TfdB FAD monooxygenase family. Homodimer. The cofactor is FAD.

It catalyses the reaction phenol + NADPH + O2 + H(+) = catechol + NADP(+) + H2O. It participates in aromatic compound metabolism; phenol degradation. Its activity is regulated as follows. Inhibited by excess phenol. Heavy metals such AsCuSO(4), AgNO(3), or HgCl(2) severely inhibit activity. Hydroxylates phenol to catechol. Phenol is the best substrate, but the enzyme also accepts isomeric diphenols, hydroxyl-, amino-, halogen- or methyl-substituted phenols and, to a lesser degree, cresols. This is Phenol hydroxylase from Cutaneotrichosporon cutaneum (Yeast).